The primary structure comprises 389 residues: Large envelope protein (389 aa).

At Met1 the chain carries N-acetylmethionine. Residue Gly2 is the site of N-myristoyl glycine; by host attachment. The segment at 2 to 108 is pre-S1; it reads GQNLSTSNPL…PPLRTTHPQA (107 aa). Positions 2 to 163 are pre-S; sequence GQNLSTSNPL…FSRIGDPALN (162 aa). Residues 2–170 are Virion surface; in external conformation-facing; sequence GQNLSTSNPL…ALNMENITSG (169 aa). The Intravirion; in internal conformation portion of the chain corresponds to 2-242; the sequence is GQNLSTSNPL…PGYRWMCLRR (241 aa). The interval 76–102 is disordered; that stretch reads TLPANPPPASTNRQSGRQPTPLSPPLR. The segment covering 85-95 has biased composition (polar residues); it reads STNRQSGRQPT. A pre-S2 region spans residues 109–163; that stretch reads MHWNSTTFHQTLQDPRVRGLYFPAGGSSSGTVNPVPTTTSPISSIFSRIGDPALN. A helical membrane pass occupies residues 171–191; the sequence is FLGPLLVLQAGFFLLTRILTI. Residues 192–242 lie on the Intravirion; in external conformation side of the membrane; that stretch reads PQSLDSWWTSLNFLGGTTVCLGQNSQSPISNHSPTSCPPTCPGYRWMCLRR. The chain crosses the membrane as a helical span at residues 243–263; the sequence is FIIFLFILLLCLIFLLVLLDY. Residues 264 to 337 lie on the Virion surface side of the membrane; sequence QGMLPVCPLI…WASARFSWLS (74 aa). An N-linked (GlcNAc...) asparagine; by host glycan is attached at Asn309. Residues 338 to 358 form a helical membrane-spanning segment; the sequence is LLVPFVQWFVGLSPIVWLSVI. The Intravirion portion of the chain corresponds to 359–364; that stretch reads WMMWYW. Residues 365 to 387 traverse the membrane as a helical segment; it reads GPSLYSILSPFLPLLPIFFCLWA. Residues 388 to 389 lie on the Virion surface side of the membrane; sequence YI.

It belongs to the orthohepadnavirus major surface antigen family. In terms of assembly, in its internal form (Li-HBsAg), interacts with the capsid protein and with the isoform S. Interacts with host chaperone CANX. Associates with host chaperone CANX through its pre-S2 N glycan; this association may be essential for isoform M proper secretion. As to quaternary structure, interacts with isoform L. Interacts with the antigens of satellite virus HDV (HDVAgs); this interaction is required for encapsidation of HDV genomic RNA. Post-translationally, isoform M is N-terminally acetylated by host at a ratio of 90%, and N-glycosylated by host at the pre-S2 region. Myristoylated.

The protein resides in the virion membrane. Functionally, the large envelope protein exists in two topological conformations, one which is termed 'external' or Le-HBsAg and the other 'internal' or Li-HBsAg. In its external conformation the protein attaches the virus to cell receptors and thereby initiating infection. This interaction determines the species specificity and liver tropism. This attachment induces virion internalization predominantly through caveolin-mediated endocytosis. The large envelope protein also assures fusion between virion membrane and endosomal membrane. In its internal conformation the protein plays a role in virion morphogenesis and mediates the contact with the nucleocapsid like a matrix protein. Its function is as follows. The middle envelope protein plays an important role in the budding of the virion. It is involved in the induction of budding in a nucleocapsid independent way. In this process the majority of envelope proteins bud to form subviral lipoprotein particles of 22 nm of diameter that do not contain a nucleocapsid. This Hepatitis B virus genotype D subtype adw (isolate United Kingdom/adyw/1979) (HBV-D) protein is Large envelope protein.